Here is a 339-residue protein sequence, read N- to C-terminus: Ketol-acid reductoisomerase (NADP(+)) (339 aa).

The KARI N-terminal Rossmann domain maps to 1–182; it reads MRVYYDRDAD…GGGRSGVIET (182 aa). NADP(+) contacts are provided by residues 24–27, arginine 48, serine 51, threonine 53, and 83–86; these read YGSQ and DELQ. Histidine 108 is an active-site residue. Glycine 134 contributes to the NADP(+) binding site. The region spanning 183-328 is the KARI C-terminal knotted domain; it reads NFREECETDL…GRLRAMMPWI (146 aa). The Mg(2+) site is built by aspartate 191, glutamate 195, glutamate 227, and glutamate 231. Residue serine 252 coordinates substrate.

The protein belongs to the ketol-acid reductoisomerase family. Mg(2+) serves as cofactor.

The catalysed reaction is (2R)-2,3-dihydroxy-3-methylbutanoate + NADP(+) = (2S)-2-acetolactate + NADPH + H(+). The enzyme catalyses (2R,3R)-2,3-dihydroxy-3-methylpentanoate + NADP(+) = (S)-2-ethyl-2-hydroxy-3-oxobutanoate + NADPH + H(+). The protein operates within amino-acid biosynthesis; L-isoleucine biosynthesis; L-isoleucine from 2-oxobutanoate: step 2/4. It participates in amino-acid biosynthesis; L-valine biosynthesis; L-valine from pyruvate: step 2/4. In terms of biological role, involved in the biosynthesis of branched-chain amino acids (BCAA). Catalyzes an alkyl-migration followed by a ketol-acid reduction of (S)-2-acetolactate (S2AL) to yield (R)-2,3-dihydroxy-isovalerate. In the isomerase reaction, S2AL is rearranged via a Mg-dependent methyl migration to produce 3-hydroxy-3-methyl-2-ketobutyrate (HMKB). In the reductase reaction, this 2-ketoacid undergoes a metal-dependent reduction by NADPH to yield (R)-2,3-dihydroxy-isovalerate. The chain is Ketol-acid reductoisomerase (NADP(+)) from Phenylobacterium zucineum (strain HLK1).